Reading from the N-terminus, the 426-residue chain is Phosphoribosylamine--glycine ligase (426 aa).

The ATP-grasp domain maps to 109–312; sequence KEVMEAAGVA…LAGVLNAVAT (204 aa). 138 to 193 contributes to the ATP binding site; the sequence is LDYFGPMYVVKDDGLAAGKGVVVTADRAEARQHIHLVHAAGNPVLLESFLDGPEVS. Glutamate 282 and asparagine 284 together coordinate Mg(2+).

The protein belongs to the GARS family. Mg(2+) is required as a cofactor. The cofactor is Mn(2+).

The enzyme catalyses 5-phospho-beta-D-ribosylamine + glycine + ATP = N(1)-(5-phospho-beta-D-ribosyl)glycinamide + ADP + phosphate + H(+). The protein operates within purine metabolism; IMP biosynthesis via de novo pathway; N(1)-(5-phospho-D-ribosyl)glycinamide from 5-phospho-alpha-D-ribose 1-diphosphate: step 2/2. The sequence is that of Phosphoribosylamine--glycine ligase from Corynebacterium ammoniagenes (Brevibacterium ammoniagenes).